Reading from the N-terminus, the 887-residue chain is Leucine--tRNA ligase (887 aa).

Residues 48 to 58 (PYPSGKLHMGH) carry the 'HIGH' region motif. A 'KMSKS' region motif is present at residues 644 to 648 (TMSKS). Residue K647 participates in ATP binding.

This sequence belongs to the class-I aminoacyl-tRNA synthetase family.

The protein resides in the cytoplasm. The catalysed reaction is tRNA(Leu) + L-leucine + ATP = L-leucyl-tRNA(Leu) + AMP + diphosphate. The protein is Leucine--tRNA ligase of Leptothrix cholodnii (strain ATCC 51168 / LMG 8142 / SP-6) (Leptothrix discophora (strain SP-6)).